The chain runs to 347 residues: GMP reductase (347 aa).

Residue Asp108 to Ala131 participates in NADP(+) binding. The K(+) site is built by Gly181 and Gly183. Residue Cys186 is the Thioimidate intermediate of the active site. Residue Ile216 to Val239 coordinates NADP(+).

Belongs to the IMPDH/GMPR family. GuaC type 1 subfamily. As to quaternary structure, homotetramer.

It carries out the reaction IMP + NH4(+) + NADP(+) = GMP + NADPH + 2 H(+). Its function is as follows. Catalyzes the irreversible NADPH-dependent deamination of GMP to IMP. It functions in the conversion of nucleobase, nucleoside and nucleotide derivatives of G to A nucleotides, and in maintaining the intracellular balance of A and G nucleotides. This chain is GMP reductase, found in Aeromonas salmonicida (strain A449).